The chain runs to 351 residues: Glucose 1-dehydrogenase 1 (351 aa).

Cysteine 39 is a Zn(2+) binding site. Substrate is bound at residue threonine 41. The Zn(2+) site is built by histidine 64 and glutamate 65. Glutamate 113 and glutamate 149 together coordinate substrate. Glutamate 149 contacts Zn(2+). Residues 182–185 (AGPI), 265–267 (LGI), and 292–294 (ATN) each bind NADP(+). Asparagine 294 serves as a coordination point for substrate.

This sequence belongs to the zinc-containing alcohol dehydrogenase family. Glucose 1-dehydrogenase subfamily. Zn(2+) serves as cofactor.

The catalysed reaction is D-glucose + NAD(+) = D-glucono-1,5-lactone + NADH + H(+). It carries out the reaction D-glucose + NADP(+) = D-glucono-1,5-lactone + NADPH + H(+). Catalyzes the NAD(P)(+)-dependent oxidation of D-glucose to D-gluconate via gluconolactone. Can utilize both NAD(+) and NADP(+) as electron acceptor. Is involved in the degradation of glucose through a non-phosphorylative variant of the Entner-Doudoroff pathway. This is Glucose 1-dehydrogenase 1 from Vulcanisaeta moutnovskia (strain 768-28).